The sequence spans 210 residues: ATP-dependent Clp protease proteolytic subunit (210 aa).

Ser106 (nucleophile) is an active-site residue. Residue His131 is part of the active site.

Belongs to the peptidase S14 family. As to quaternary structure, fourteen ClpP subunits assemble into 2 heptameric rings which stack back to back to give a disk-like structure with a central cavity, resembling the structure of eukaryotic proteasomes.

It is found in the cytoplasm. It carries out the reaction Hydrolysis of proteins to small peptides in the presence of ATP and magnesium. alpha-casein is the usual test substrate. In the absence of ATP, only oligopeptides shorter than five residues are hydrolyzed (such as succinyl-Leu-Tyr-|-NHMec, and Leu-Tyr-Leu-|-Tyr-Trp, in which cleavage of the -Tyr-|-Leu- and -Tyr-|-Trp bonds also occurs).. In terms of biological role, cleaves peptides in various proteins in a process that requires ATP hydrolysis. Has a chymotrypsin-like activity. Plays a major role in the degradation of misfolded proteins. The polypeptide is ATP-dependent Clp protease proteolytic subunit (Afipia carboxidovorans (strain ATCC 49405 / DSM 1227 / KCTC 32145 / OM5) (Oligotropha carboxidovorans)).